The chain runs to 166 residues: Regulatory protein RecX (166 aa).

Belongs to the RecX family.

It is found in the cytoplasm. Its function is as follows. Modulates RecA activity. The chain is Regulatory protein RecX from Salmonella paratyphi A (strain ATCC 9150 / SARB42).